Here is a 395-residue protein sequence, read N- to C-terminus: Zinc-regulated GTPase metalloprotein activator 1A (395 aa).

Positions 1-22 (MLPAVGSADEEEDPAEEDCPEL) are disordered. Over residues 8 to 20 (ADEEEDPAEEDCP) the composition is skewed to acidic residues. Positions 17–24 (EDCPELVP) match the psi-PxLVp motif motif. 49-56 (GYLGAGKT) contacts GTP. Cys107, Cys109, and Cys110 together coordinate Zn(2+). The CXCC motif signature appears at 107-110 (CLCC). GTP contacts are provided by residues 110–114 (CSVKD) and 203–206 (NKTD). A CobW C-terminal domain is found at 274 to 377 (IVTITFEVPG…ILKQLFIATV (104 aa)).

The protein belongs to the SIMIBI class G3E GTPase family. ZNG1 subfamily. As to expression, ubiquitously expressed. Up-regulated in cultured astrocytes treated with dopamine.

The protein localises to the nucleus. It carries out the reaction GTP + H2O = GDP + phosphate + H(+). In terms of biological role, zinc chaperone that directly transfers zinc cofactor to target metalloproteins, thereby activating them. Catalyzes zinc insertion into the active site of methionine aminopeptidase METAP1, which function to cleave the initiator methionine from polypeptides during or after protein translation. Mechanistically, the N-terminal psi-PxLVp motif binds to the C6H2-type zinc finger of inactive form of METAP1. After formation of the docked complex, zinc is transferred from the CXCC motif in the GTPase domain of ZNG1A to the zinc binding site in the peptidase domain of METAP1 in a process requiring GTP hydrolysis. GTP/GDP exchange is required for release of active METAP1. This is Zinc-regulated GTPase metalloprotein activator 1A from Homo sapiens (Human).